The chain runs to 255 residues: Thiazole synthase (255 aa).

Lys96 serves as the catalytic Schiff-base intermediate with DXP. Residues Gly157, 183–184, and 205–206 contribute to the 1-deoxy-D-xylulose 5-phosphate site; these read AG and NT.

This sequence belongs to the ThiG family. Homotetramer. Forms heterodimers with either ThiH or ThiS.

Its subcellular location is the cytoplasm. The catalysed reaction is [ThiS sulfur-carrier protein]-C-terminal-Gly-aminoethanethioate + 2-iminoacetate + 1-deoxy-D-xylulose 5-phosphate = [ThiS sulfur-carrier protein]-C-terminal Gly-Gly + 2-[(2R,5Z)-2-carboxy-4-methylthiazol-5(2H)-ylidene]ethyl phosphate + 2 H2O + H(+). Its pathway is cofactor biosynthesis; thiamine diphosphate biosynthesis. In terms of biological role, catalyzes the rearrangement of 1-deoxy-D-xylulose 5-phosphate (DXP) to produce the thiazole phosphate moiety of thiamine. Sulfur is provided by the thiocarboxylate moiety of the carrier protein ThiS. In vitro, sulfur can be provided by H(2)S. This chain is Thiazole synthase, found in Geobacillus thermodenitrificans (strain NG80-2).